A 1400-amino-acid polypeptide reads, in one-letter code: Alpha-(1-&gt;3)-arabinofuranosyltransferase (1400 aa).

The signal sequence occupies residues 1-30; the sequence is MAPLSRKWLPVVGAVALALTFAQSPGQVSP. Helical transmembrane passes span 67 to 87, 91 to 111, 139 to 159, 179 to 199, 215 to 235, 282 to 302, 314 to 334, and 401 to 421; these read YLFPHGTFFVIGHLLGVPGWV, LWWAVLLTVGFWGLLRVAEAL, ISSETLPMMLAPWVLLPTILA, VALMGAVNAIATLAGCLPAVI, AWWLLAMALATLWWVMALTQL, LVTGSAAILGTCLVAAAGLAG, LVTMLLVGVVLLAVGHRGGLA, and VAVAVVALTALMVSTSLAWTG. One can recognise an F5/8 type C domain in the interval 700–883; sequence AEPVVGGWTG…WDLGSELLGR (184 aa). 4 helical membrane passes run 1256-1276, 1297-1317, 1338-1358, and 1369-1389; these read LYRASLAIGLALLPLLALLAF, WAAAGVLAAGAVIASIAGVMV, VTVGLAAGGLILAGAALSRHP, and WASVQLLALISVSVVAASVVA.

The protein localises to the membrane. The catalysed reaction is Adds an alpha-D-arabinofuranosyl group from trans,octacis-decaprenylphospho-beta-D-arabinofuranose at the 3-O-position of an alpha-(1-&gt;5)-arabinofuranan chain attached to a beta-(1-&gt;5)-galactofuranan chain.. It participates in cell wall biogenesis; cell wall polysaccharide biosynthesis. In terms of biological role, involved in the biosynthesis of the arabinogalactan (AG) region of the mycolylarabinogalactan-peptidoglycan (mAGP) complex, an essential component of the mycobacterial cell wall. Catalyzes the addition of an arabinofuranosyl (Araf) residue from the sugar donor decaprenyl-phospho-arabinose (DPA) on the C-3 of an alpha-(1-&gt;5)-linked Araf from the arabinan backbone of AG. This is Alpha-(1-&gt;3)-arabinofuranosyltransferase (aftD) from Mycobacterium tuberculosis (strain ATCC 25618 / H37Rv).